The sequence spans 494 residues: UDP-N-acetylmuramate--L-alanine ligase (494 aa).

Glycine 140–threonine 146 is an ATP binding site.

It belongs to the MurCDEF family.

Its subcellular location is the cytoplasm. The enzyme catalyses UDP-N-acetyl-alpha-D-muramate + L-alanine + ATP = UDP-N-acetyl-alpha-D-muramoyl-L-alanine + ADP + phosphate + H(+). It functions in the pathway cell wall biogenesis; peptidoglycan biosynthesis. Functionally, cell wall formation. The polypeptide is UDP-N-acetylmuramate--L-alanine ligase (Trichormus variabilis (strain ATCC 29413 / PCC 7937) (Anabaena variabilis)).